The chain runs to 201 residues: Lipopolysaccharide core heptose(II)-phosphate phosphatase (201 aa).

The first 33 residues, 1–33, serve as a signal peptide directing secretion; that stretch reads MLAFTLRFIKNKRYFAILAGALVIIAGLASQHA.

The protein belongs to the phosphoglycerate mutase family. Ais subfamily.

The protein resides in the periplasm. It functions in the pathway bacterial outer membrane biogenesis; lipopolysaccharide metabolism. Its function is as follows. Catalyzes the dephosphorylation of heptose(II) of the outer membrane lipopolysaccharide core. In Salmonella typhi, this protein is Lipopolysaccharide core heptose(II)-phosphate phosphatase.